The following is a 76-amino-acid chain: Conotoxin MaIr332 (76 aa).

Positions 1–21 are cleaved as a signal peptide; sequence MKLTCVIVAVLFLTAWTFVTA. Positions 22–48 are excised as a propeptide; that stretch reads DDSGNGLENLFSKAHHEMKNPKDSKLN. 3 disulfide bridges follow: Cys51–Cys66, Cys58–Cys70, and Cys65–Cys75.

It belongs to the conotoxin O1 superfamily. Expressed by the venom duct.

The protein localises to the secreted. The protein is Conotoxin MaIr332 of Conus marmoreus (Marble cone).